Reading from the N-terminus, the 199-residue chain is Recombination protein RecR (199 aa).

Residues 57–72 (CQSCRTYTEETLCPIC) form a C4-type zinc finger. The region spanning 81–176 (STICVVETPA…MISRIAHGVP (96 aa)) is the Toprim domain.

It belongs to the RecR family.

May play a role in DNA repair. It seems to be involved in an RecBC-independent recombinational process of DNA repair. It may act with RecF and RecO. This chain is Recombination protein RecR, found in Shewanella baltica (strain OS155 / ATCC BAA-1091).